Here is a 244-residue protein sequence, read N- to C-terminus: Mediator of RNA polymerase II transcription subunit 9 (244 aa).

The segment covering 1-10 (MDQFSGGGGN) has biased composition (gly residues). 2 disordered regions span residues 1-28 (MDQF…TPTN) and 96-131 (QQRL…HTPQ). A compositionally biased stretch (polar residues) spans 13 to 28 (MIPNVQAQGNFGTPTN). 2 stretches are compositionally biased toward low complexity: residues 96–111 (QQRL…QSLQ) and 122–131 (TPQSMMHTPQ). Residues 212–239 (KRNVEESEQLLQQRRDLIVEYRKSIEEI) adopt a coiled-coil conformation.

The protein belongs to the plant Mediator complex subunit 9 family. In terms of assembly, component of the Mediator complex. Interacts with MEE14/CBP1.

It is found in the nucleus. Its function is as follows. Component of the Mediator complex, a coactivator involved in the regulated transcription of nearly all RNA polymerase II-dependent genes. Mediator functions as a bridge to convey information from gene-specific regulatory proteins to the basal RNA polymerase II transcription machinery. The Mediator complex, having a compact conformation in its free form, is recruited to promoters by direct interactions with regulatory proteins and serves for the assembly of a functional pre-initiation complex with RNA polymerase II and the general transcription factors. The chain is Mediator of RNA polymerase II transcription subunit 9 (MED9) from Arabidopsis thaliana (Mouse-ear cress).